A 1310-amino-acid polypeptide reads, in one-letter code: Major viral transcription factor ICP4 homolog (1310 aa).

Disordered regions lie at residues 117 to 271 (AGAR…GPVE), 285 to 454 (GAKA…TPII), and 636 to 696 (GSSP…SLLD). A compositionally biased stretch (basic and acidic residues) spans 341–350 (PVEKKPKSRE). Low complexity-rich tracts occupy residues 351-364 (FVSSSSSSSSWGSS), 392-407 (PSPSNSDDSDSNDGGS), and 648-666 (PSPTTPATQTPDPQPSAAA). The Nuclear localization signal signature appears at 677 to 685 (RLRTPRKRK). Residues serine 686 and serine 722 each carry the phosphoserine; by VZV ORF66 modification. Disordered regions lie at residues 1195-1258 (RFVF…SFGV) and 1282-1310 (ELLSSSSSSEDEDDVWGGRGGRSPPQSRG). The span at 1217–1227 (RTADDREHALE) shows a compositional bias: basic and acidic residues. Acidic residues predominate over residues 1228 to 1250 (PDDWEVGCEDAWDSEEGGGDDGD).

The protein belongs to the herpesviridae ICP4 family. In terms of assembly, interacts with IE4 and IE63. Interacts with human USF1 and SP1. In terms of processing, phosphorylated by ORF66 protein kinase on Ser-686 and Ser-722. Also phosphorylated by ORF47 protein kinase and by human CSNK2A1/CKII.

The protein resides in the host nucleus. Its subcellular location is the host cytoplasm. It is found in the virion tegument. Functionally, transcriptional transactivator. May interact with and recruit specific components of the general transcription machinery to viral promoters and stabilize their formation for transcription initiation. Negatively regulates its own transcription. This immediate early (EI) protein may be necessary in virion for viral pathogenesis. In Homo sapiens (Human), this protein is Major viral transcription factor ICP4 homolog.